The following is a 659-amino-acid chain: Cysteine-rich receptor-like protein kinase 5 (659 aa).

Residues 1–24 (MSAYTSLNFLFLLTFFIGSLRVSA) form the signal peptide. The Extracellular portion of the chain corresponds to 25–279 (QLQDPTYVGH…FPPGKGKNST (255 aa)). Gnk2-homologous domains lie at 28 to 132 (DPTY…DRNI) and 138 to 243 (TTTT…VYPF). Residues N175 and N277 are each glycosylated (N-linked (GlcNAc...) asparagine). Residues 280–300 (VIIIAIVVPVAISVLICVAVF) traverse the membrane as a helical segment. Topologically, residues 301 to 659 (SFHASKRAKK…AASITILAPR (359 aa)) are cytoplasmic. The Protein kinase domain occupies 340–619 (FSMCNKLGQG…QMLTTSSIAL (280 aa)). ATP is bound by residues 346–354 (LGQGGFGQV) and K368. Y413 carries the phosphotyrosine modification. The active-site Proton acceptor is the D465. Phosphothreonine is present on T505. A Phosphotyrosine modification is found at Y513.

It belongs to the protein kinase superfamily. Ser/Thr protein kinase family. CRK subfamily. As to quaternary structure, interacts with CRKIP1 (KAPP), CRKIP2 and CRKIP3, three kinase-associated type 2C proteins.

The protein localises to the membrane. The enzyme catalyses L-seryl-[protein] + ATP = O-phospho-L-seryl-[protein] + ADP + H(+). It catalyses the reaction L-threonyl-[protein] + ATP = O-phospho-L-threonyl-[protein] + ADP + H(+). Its function is as follows. Involved in multiple distinct defense responses. May function as a disease resistance (R) protein. The polypeptide is Cysteine-rich receptor-like protein kinase 5 (CRK5) (Arabidopsis thaliana (Mouse-ear cress)).